Here is a 1454-residue protein sequence, read N- to C-terminus: Mediator of RNA polymerase II transcription subunit 14 (1454 aa).

The tract at residues 1–34 (MAPVQLENHQLVPPGGGGGGSGGPPSAPAPPPPG) is disordered. Gly residues predominate over residues 14-23 (PGGGGGGSGG). A compositionally biased stretch (pro residues) spans 25-34 (PSAPAPPPPG). Positions 69-73 (LTDLL) match the LXXLL motif 1 motif. The interval 188-566 (KQATLHQLNQ…VPNKPTQLSY (379 aa)) is interaction with STAT2. Residues 500-824 (LGQQRCKQSI…TKGSSISIQW (325 aa)) are interaction with SREBF1. Phosphoserine is present on residues S617 and S986. Residues 973 to 1167 (ARRRSVNEDD…MPPPRKLPQR (195 aa)) form a disordered region. Pro residues predominate over residues 1001–1011 (QPPPQQQPFPK). 2 stretches are compositionally biased toward polar residues: residues 1024 to 1054 (PPTSYHSTVNQSPSMMHTQSPGNLHAASSPS) and 1092 to 1101 (DPSSPYTMVS). Phosphoserine is present on residues S1112, S1119, S1128, S1136, and S1144. Residues 1147-1156 (AGTSSQTMPT) show a composition bias toward polar residues. The LXXLL motif 2 signature appears at 1182 to 1186 (LNILL).

This sequence belongs to the Mediator complex subunit 14 family. As to quaternary structure, interacts with GATA1. Component of the Mediator complex, which is composed of MED1, MED4, MED6, MED7, MED8, MED9, MED10, MED11, MED12, MED13, MED13L, MED14, MED15, MED16, MED17, MED18, MED19, MED20, MED21, MED22, MED23, MED24, MED25, MED26, MED27, MED29, MED30, MED31, CCNC, CDK8 and CDC2L6/CDK11. The MED12, MED13, CCNC and CDK8 subunits form a distinct module termed the CDK8 module. Mediator containing the CDK8 module is less active than Mediator lacking this module in supporting transcriptional activation. Individual preparations of the Mediator complex lacking one or more distinct subunits have been variously termed ARC, CRSP, DRIP, PC2, SMCC and TRAP. Interacts with AR, ESR1, SREBF1 and STAT2. Ubiquitous.

It localises to the nucleus. In terms of biological role, component of the Mediator complex, a coactivator involved in the regulated transcription of nearly all RNA polymerase II-dependent genes. Mediator functions as a bridge to convey information from gene-specific regulatory proteins to the basal RNA polymerase II transcription machinery. Mediator is recruited to promoters by direct interactions with regulatory proteins and serves as a scaffold for the assembly of a functional preinitiation complex with RNA polymerase II and the general transcription factors. This Homo sapiens (Human) protein is Mediator of RNA polymerase II transcription subunit 14 (MED14).